The chain runs to 110 residues: Large ribosomal subunit protein uL22 (110 aa).

It belongs to the universal ribosomal protein uL22 family. Part of the 50S ribosomal subunit.

In terms of biological role, this protein binds specifically to 23S rRNA; its binding is stimulated by other ribosomal proteins, e.g. L4, L17, and L20. It is important during the early stages of 50S assembly. It makes multiple contacts with different domains of the 23S rRNA in the assembled 50S subunit and ribosome. The globular domain of the protein is located near the polypeptide exit tunnel on the outside of the subunit, while an extended beta-hairpin is found that lines the wall of the exit tunnel in the center of the 70S ribosome. In Shewanella baltica (strain OS223), this protein is Large ribosomal subunit protein uL22.